A 149-amino-acid chain; its full sequence is Transcriptional repressor NrdR (149 aa).

A zinc finger spans residues Cys-3–Cys-34. In terms of domain architecture, ATP-cone spans Ile-49 to Thr-139.

This sequence belongs to the NrdR family. Requires Zn(2+) as cofactor.

Functionally, negatively regulates transcription of bacterial ribonucleotide reductase nrd genes and operons by binding to NrdR-boxes. The protein is Transcriptional repressor NrdR of Clostridium perfringens (strain SM101 / Type A).